We begin with the raw amino-acid sequence, 262 residues long: RNA-binding protein 7 (262 aa).

At G2 the chain carries N-acetylglycine. Positions 10–87 (RTLFVGNLET…RPIKIQFRAG (78 aa)) constitute an RRM domain. ZCCHC8 binding regions lie at residues 25 to 35 (LLFELFHQAGP) and 59 to 76 (HEVS…IKLF). The tract at residues 95-121 (VSLSYPQHHVGNSSPTSTSPSRTVDNM) is disordered. Phosphoserine occurs at positions 133 and 134. R149 is modified (omega-N-methylarginine). Disordered regions lie at residues 159 to 212 (SPHL…HYSR) and 242 to 262 (SHDY…SSRH). Residues 165 to 194 (SGFSPSAQSHNHTFNQSSSSQWRQDTPSSQ) are compositionally biased toward polar residues. Position 201 is a phosphoserine (S201). Basic and acidic residues predominate over residues 242–253 (SHDYDNRRDSGR).

In terms of assembly, component of the nuclear exosome targeting (NEXT) complex composed of MTREX, ZCCHC8, and RBM7 that directs a subset of non-coding short-lived RNAs for exosomal degradation. Interacts with ZCCHC8 and SF3B2/SAP145. Binds to MTREX through ZCCHC8. Interacts with YWHAE and YWHAZ; these interactions are stress-dependent and RBM7 phosphorylation dependent; release RNA from the NEXT complex and may affect RNA targeting to the nuclear RNA exosomome for degradation. Interacts with MEPCE and LARP7, the core subunits of 7SK snRNP; upon genotoxic stress this interaction is enhanced, triggering the release of inactive P-TEFb complex from the core and P-TEFb complex activation. Phosphorylated at Ser-133 by MAPK14/p38-alpha-activated MAPKAPK2/MK2; this phosphorylation is stress-dependent; this phosphorylation decreases its RNA-binding capacity therefore affecting RNA nuclear exosome-mediated degradation. This phosphorylation mediates YWHAE and YWHAZ interactions.

Its subcellular location is the nucleus. The protein localises to the nucleoplasm. Its function is as follows. RNA-binding subunit of the trimeric nuclear exosome targeting (NEXT) complex, a complex that functions as an RNA exosome cofactor that directs a subset of non-coding short-lived RNAs for exosomal degradation. NEXT is involved in surveillance and turnover of aberrant transcripts and non-coding RNAs. Binds preferentially polyuridine sequences and associates with newly synthesized RNAs, including pre-mRNAs and short-lived exosome substrates such as promoter upstream transcripts (PROMPTs), enhancer RNAs (eRNAs), and 3'-extended products from small nuclear RNAs (snRNAs). Participates in several biological processes including DNA damage response (DDR) and stress response. During stress response, activation of the p38MAPK-MK2 pathway decreases RBM7-RNA-binding and subsequently the RNA exosome degradation activities, thereby modulating the turnover of non-coding transcriptome. Participates in DNA damage response (DDR), through its interaction with MEPCE and LARP7, the core subunits of 7SK snRNP complex, that release the positive transcription elongation factor b (P-TEFb) complex from the 7SK snRNP. In turn, activation of P-TEFb complex induces the transcription of P-TEFb-dependent DDR genes to promote cell viability. The chain is RNA-binding protein 7 from Bos taurus (Bovine).